Consider the following 402-residue polypeptide: Dynactin subunit 2 (402 aa).

The interval 1–24 (MADPKYADLPGIARNEPDVYETSD) is disordered. An N-acetylalanine modification is found at Ala-2. Phosphotyrosine is present on Tyr-6. Position 83 is a phosphoserine (Ser-83). Tyr-86 carries the phosphotyrosine modification. Positions 100–130 (QQKYQRLLHEVQELTTEVEKIKTTVKESATE) form a coiled coil. A phosphothreonine mark is found at Thr-134 and Thr-199. The interval 185 to 205 (KSSKGSSGGKSTGGTPPDSSL) is disordered. Residues 215–247 (EQDKFSQAAKVAELEKRLTELEATVRCDQDAQN) are a coiled coil. Phosphoserine is present on Ser-321.

Belongs to the dynactin subunit 2 family. As to quaternary structure, subunit of dynactin, a multiprotein complex part of a tripartite complex with dynein and a adapter, such as BICDL1, BICD2 or HOOK3. The dynactin complex is built around ACTR1A/ACTB filament and consists of an actin-related filament composed of a shoulder domain, a pointed end and a barbed end. Its length is defined by its flexible shoulder domain. The soulder is composed of 2 DCTN1 subunits, 4 DCTN2 and 2 DCTN3. The 4 DCNT2 (via N-terminus) bind the ACTR1A filament and act as molecular rulers to determine the length. The pointed end is important for binding dynein-dynactin cargo adapters and consists of 4 subunits: ACTR10, DCNT4, DCTN5 and DCTN6. The barbed end is composed of a CAPZA1:CAPZB heterodimers, which binds ACTR1A/ACTB filament and dynactin and stabilizes dynactin. Interacts with BICD2 and CEP135. Interacts with DYNAP. Interacts with ECPAS. Interacts with MAPRE1.

It is found in the cytoplasm. The protein resides in the cytoskeleton. It localises to the microtubule organizing center. The protein localises to the centrosome. Its subcellular location is the membrane. Part of the dynactin complex that activates the molecular motor dynein for ultra-processive transport along microtubules. In the dynactin soulder domain, binds the ACTR1A filament and acts as a molecular ruler to determine the length. Modulates cytoplasmic dynein binding to an organelle, and plays a role in prometaphase chromosome alignment and spindle organization during mitosis. Involved in anchoring microtubules to centrosomes. May play a role in synapse formation during brain development. The polypeptide is Dynactin subunit 2 (Dctn2) (Rattus norvegicus (Rat)).